Here is a 345-residue protein sequence, read N- to C-terminus: Dimethyladenosine transferase 1, mitochondrial (345 aa).

The transit peptide at 1 to 27 (MAASGKLGTFRLPPLPTIREIIKLFGL) directs the protein to the mitochondrion. Residues leucine 38, glycine 63, glutamate 85, lysine 86, aspartate 111, valine 112, and asparagine 141 each coordinate S-adenosyl-L-methionine.

It belongs to the class I-like SAM-binding methyltransferase superfamily. rRNA adenine N(6)-methyltransferase family. KsgA subfamily. In terms of assembly, interacts with mitochondrial RNA polymerase POLRMT. Interacts with TFAM. Remains bound to the maturing mtSSU until the late stages of assembly. As to expression, ubiquitously expressed.

The protein localises to the mitochondrion. It catalyses the reaction adenosine(N)/adenosine(N+1) in rRNA + 4 S-adenosyl-L-methionine = N(6)-dimethyladenosine(N)/N(6)-dimethyladenosine(N+1) in rRNA + 4 S-adenosyl-L-homocysteine + 4 H(+). Mitochondrial methyltransferase which uses S-adenosyl methionine to dimethylate two highly conserved adjacent adenosine residues (A1006 and A1007) within the loop of helix 45 at the 3-prime end of 12S rRNA, thereby regulating the assembly or stability of the small subunit of the mitochondrial ribosome. Also required for basal transcription of mitochondrial DNA, probably via its interaction with POLRMT and TFAM. Stimulates transcription independently of the methyltransferase activity. In Mus musculus (Mouse), this protein is Dimethyladenosine transferase 1, mitochondrial (Tfb1m).